We begin with the raw amino-acid sequence, 170 residues long: NADH-quinone oxidoreductase subunit B (170 aa).

[4Fe-4S] cluster-binding residues include C37, C38, C102, and C131.

It belongs to the complex I 20 kDa subunit family. NDH-1 is composed of 14 different subunits. Subunits NuoB, C, D, E, F, and G constitute the peripheral sector of the complex. The cofactor is [4Fe-4S] cluster.

The protein resides in the cell inner membrane. The catalysed reaction is a quinone + NADH + 5 H(+)(in) = a quinol + NAD(+) + 4 H(+)(out). Functionally, NDH-1 shuttles electrons from NADH, via FMN and iron-sulfur (Fe-S) centers, to quinones in the respiratory chain. The immediate electron acceptor for the enzyme in this species is believed to be ubiquinone. Couples the redox reaction to proton translocation (for every two electrons transferred, four hydrogen ions are translocated across the cytoplasmic membrane), and thus conserves the redox energy in a proton gradient. This chain is NADH-quinone oxidoreductase subunit B, found in Geobacter sp. (strain M21).